The chain runs to 225 residues: Peptidyl-prolyl cis-trans isomerase D (225 aa).

Positions 1–22 (MKLQFFSFITLFACLFTTAIFA) are cleaved as a signal peptide. The region spanning 37 to 195 (YFDINHGDKQ…KEVIIVESGE (159 aa)) is the PPIase cyclophilin-type domain. N139 is a glycosylation site (N-linked (GlcNAc...) asparagine). A Prevents secretion from ER motif is present at residues 222–225 (HDEL).

The protein belongs to the cyclophilin-type PPIase family. PPIase B subfamily.

Its subcellular location is the endoplasmic reticulum lumen. The catalysed reaction is [protein]-peptidylproline (omega=180) = [protein]-peptidylproline (omega=0). In terms of biological role, PPIases accelerate the folding of proteins. It catalyzes the cis-trans isomerization of proline imidic peptide bonds in oligopeptides. In Saccharomyces cerevisiae (strain ATCC 204508 / S288c) (Baker's yeast), this protein is Peptidyl-prolyl cis-trans isomerase D.